Reading from the N-terminus, the 441-residue chain is Ribulose bisphosphate carboxylase large chain (441 aa).

Residues N89 and T139 each coordinate substrate. K141 serves as the catalytic Proton acceptor. Substrate is bound at residue K143. Residues K167, D169, and E170 each contribute to the Mg(2+) site. K167 carries the N6-carboxylysine modification. Residue H260 is the Proton acceptor of the active site. R261, H293, and S345 together coordinate substrate.

It belongs to the RuBisCO large chain family. Type I subfamily. Heterohexadecamer of 8 large chains and 8 small chains; disulfide-linked. The disulfide link is formed within the large subunit homodimers. Requires Mg(2+) as cofactor. The disulfide bond which can form in the large chain dimeric partners within the hexadecamer appears to be associated with oxidative stress and protein turnover.

The protein localises to the plastid. It localises to the chloroplast. The catalysed reaction is 2 (2R)-3-phosphoglycerate + 2 H(+) = D-ribulose 1,5-bisphosphate + CO2 + H2O. It catalyses the reaction D-ribulose 1,5-bisphosphate + O2 = 2-phosphoglycolate + (2R)-3-phosphoglycerate + 2 H(+). RuBisCO catalyzes two reactions: the carboxylation of D-ribulose 1,5-bisphosphate, the primary event in carbon dioxide fixation, as well as the oxidative fragmentation of the pentose substrate in the photorespiration process. Both reactions occur simultaneously and in competition at the same active site. This chain is Ribulose bisphosphate carboxylase large chain, found in Symphoricarpos albus (Common snowberry).